Reading from the N-terminus, the 472-residue chain is Argininosuccinate lyase (472 aa).

Belongs to the lyase 1 family. Argininosuccinate lyase subfamily.

Its subcellular location is the cytoplasm. It catalyses the reaction 2-(N(omega)-L-arginino)succinate = fumarate + L-arginine. The protein operates within amino-acid biosynthesis; L-arginine biosynthesis; L-arginine from L-ornithine and carbamoyl phosphate: step 3/3. In Synechococcus sp. (strain CC9311), this protein is Argininosuccinate lyase.